Consider the following 459-residue polypeptide: Transcription factor mlcR (459 aa).

Residues 21–53 (CDRCHAQKLKCTGSNANLVRAQCQRCQQAGLRC) constitute a DNA-binding region (zn(2)-C6 fungal-type). Disordered regions lie at residues 64 to 84 (LHKE…PMTA) and 135 to 170 (DPES…DFEG). Residues 69-78 (AAGTTRATET) show a composition bias toward low complexity.

It localises to the nucleus. Functionally, transcription factor that regulates the gene cluster that mediates the biosynthesis of compactin, also known as mevastatin or ML-236B, and which acts as a potent competitive inhibitor of HMG-CoA reductase. Binds to the consensus-binding motif 5'-WCGG-N(6)-TCGG-3' of target genes. The chain is Transcription factor mlcR from Penicillium citrinum.